The sequence spans 235 residues: Ribose-5-phosphate isomerase A (235 aa).

Substrate is bound by residues 32 to 35 (TGST), 89 to 92 (DGAD), and 102 to 105 (KGGG). The active-site Proton acceptor is the E111. K129 is a substrate binding site.

Belongs to the ribose 5-phosphate isomerase family. In terms of assembly, homodimer.

The enzyme catalyses aldehydo-D-ribose 5-phosphate = D-ribulose 5-phosphate. It functions in the pathway carbohydrate degradation; pentose phosphate pathway; D-ribose 5-phosphate from D-ribulose 5-phosphate (non-oxidative stage): step 1/1. Catalyzes the reversible conversion of ribose-5-phosphate to ribulose 5-phosphate. This chain is Ribose-5-phosphate isomerase A, found in Synechocystis sp. (strain ATCC 27184 / PCC 6803 / Kazusa).